The primary structure comprises 325 residues: MNLNKHSERKFDLITVGRACIDLNAVEYNRPMEETMTFSKYVGGSPANIAIGTAKLGLKVGFIGKISDDQHGRFIEKYMRDLNINTDGMVKDTAGRKVGLAFTEIKSPEECSILMYRENVADLYLTPEEISEDYIKETRVLLVSGTALAQSPSREAVLKAVHLAQKNDVIVAFELDYRPYTWKNTEETAVYYSLVAEQADVIIGTRDEFDMMENQIGGNNEMTIDNLFKHKAEIIVIKHGVEGSFAYTKAGETFRAQAYKTKVLKTFGAGDSYASAFLYGLFSGENIETALKFGSAAASIVVSKHSSSDAMPTADEIKALIANAD.

The protein belongs to the carbohydrate kinase PfkB family.

It carries out the reaction 5-dehydro-2-deoxy-D-gluconate + ATP = 6-phospho-5-dehydro-2-deoxy-D-gluconate + ADP + H(+). It participates in polyol metabolism; myo-inositol degradation into acetyl-CoA; acetyl-CoA from myo-inositol: step 5/7. Functionally, catalyzes the phosphorylation of 5-dehydro-2-deoxy-D-gluconate (2-deoxy-5-keto-D-gluconate or DKG) to 6-phospho-5-dehydro-2-deoxy-D-gluconate (DKGP). This Listeria innocua serovar 6a (strain ATCC BAA-680 / CLIP 11262) protein is 5-dehydro-2-deoxygluconokinase.